Consider the following 75-residue polypeptide: Guanine nucleotide-binding protein G(I)/G(S)/G(O) subunit gamma-4 (75 aa).

Cys72 bears the Cysteine methyl ester mark. Cys72 carries S-geranylgeranyl cysteine lipidation. Residues Thr73–Leu75 constitute a propeptide, removed in mature form.

It belongs to the G protein gamma family. In terms of assembly, g proteins are composed of 3 units, alpha, beta and gamma. Interacts with beta-1 and beta-2, but not with beta-3. Interacts with KCNK1. Interacts (via C-terminus) with KCNK2/TREK-1 (via N-terminus); this interaction confers ion selectivity to Cl(-) and L-glutamate. In terms of tissue distribution, brain, kidney, pancreas, skeletal muscle and faintly in cardiac muscle.

It is found in the cell membrane. Its function is as follows. Guanine nucleotide-binding proteins (G proteins) are involved as a modulator or transducer in various transmembrane signaling systems. The beta and gamma chains are required for the GTPase activity, for replacement of GDP by GTP, and for G protein-effector interaction. In Homo sapiens (Human), this protein is Guanine nucleotide-binding protein G(I)/G(S)/G(O) subunit gamma-4 (GNG4).